The chain runs to 166 residues: Endoribonuclease YbeY (166 aa).

Zn(2+) is bound by residues histidine 132, histidine 136, and histidine 142.

Belongs to the endoribonuclease YbeY family. Zn(2+) is required as a cofactor.

It localises to the cytoplasm. Single strand-specific metallo-endoribonuclease involved in late-stage 70S ribosome quality control and in maturation of the 3' terminus of the 16S rRNA. This Clostridium botulinum (strain Langeland / NCTC 10281 / Type F) protein is Endoribonuclease YbeY.